The sequence spans 251 residues: Ubiquinone/menaquinone biosynthesis C-methyltransferase UbiE (251 aa).

S-adenosyl-L-methionine contacts are provided by residues Thr74, Asp95, and 123 to 124 (NA).

This sequence belongs to the class I-like SAM-binding methyltransferase superfamily. MenG/UbiE family.

The enzyme catalyses a 2-demethylmenaquinol + S-adenosyl-L-methionine = a menaquinol + S-adenosyl-L-homocysteine + H(+). It catalyses the reaction a 2-methoxy-6-(all-trans-polyprenyl)benzene-1,4-diol + S-adenosyl-L-methionine = a 5-methoxy-2-methyl-3-(all-trans-polyprenyl)benzene-1,4-diol + S-adenosyl-L-homocysteine + H(+). The protein operates within quinol/quinone metabolism; menaquinone biosynthesis; menaquinol from 1,4-dihydroxy-2-naphthoate: step 2/2. It functions in the pathway cofactor biosynthesis; ubiquinone biosynthesis. Methyltransferase required for the conversion of demethylmenaquinol (DMKH2) to menaquinol (MKH2) and the conversion of 2-polyprenyl-6-methoxy-1,4-benzoquinol (DDMQH2) to 2-polyprenyl-3-methyl-6-methoxy-1,4-benzoquinol (DMQH2). The sequence is that of Ubiquinone/menaquinone biosynthesis C-methyltransferase UbiE from Shewanella woodyi (strain ATCC 51908 / MS32).